Here is a 450-residue protein sequence, read N- to C-terminus: 3-phosphoshikimate 1-carboxyvinyltransferase (450 aa).

Residues Lys-23, Ser-24, and Arg-28 each coordinate 3-phosphoshikimate. Lys-23 serves as a coordination point for phosphoenolpyruvate. Phosphoenolpyruvate is bound by residues Gly-96 and Arg-124. 3-phosphoshikimate contacts are provided by Ser-167, Ser-168, Gln-169, Ser-196, Glu-311, and His-340. Residue Gln-169 coordinates phosphoenolpyruvate. The Proton acceptor role is filled by Glu-311. The phosphoenolpyruvate site is built by Arg-344, Arg-385, and Lys-410. Residues 426–450 form a disordered region; sequence GQGWGYPQPRSGQRARRATGQGSGG.

The protein belongs to the EPSP synthase family. Monomer.

Its subcellular location is the cytoplasm. The catalysed reaction is 3-phosphoshikimate + phosphoenolpyruvate = 5-O-(1-carboxyvinyl)-3-phosphoshikimate + phosphate. It participates in metabolic intermediate biosynthesis; chorismate biosynthesis; chorismate from D-erythrose 4-phosphate and phosphoenolpyruvate: step 6/7. Functionally, catalyzes the transfer of the enolpyruvyl moiety of phosphoenolpyruvate (PEP) to the 5-hydroxyl of shikimate-3-phosphate (S3P) to produce enolpyruvyl shikimate-3-phosphate and inorganic phosphate. This Mycobacterium tuberculosis (strain ATCC 25177 / H37Ra) protein is 3-phosphoshikimate 1-carboxyvinyltransferase.